A 349-amino-acid chain; its full sequence is uncharacterized protein (349 aa).

Position 2 is a phosphoserine (Ser2).

This is an uncharacterized protein from Saccharomyces cerevisiae (strain ATCC 204508 / S288c) (Baker's yeast).